Consider the following 122-residue polypeptide: Serum amyloid A-1 protein (122 aa).

The signal sequence occupies residues 1-19 (MKLLTSLVFCSLLLGVCHG). The segment at 20–45 (GFFSFVHEAFQGAGDMWRAYTDMKEA) is important for amyloid formation. A compositionally biased stretch (basic and acidic residues) spans 91-108 (HEDTIADQEANRHGRSGK). Positions 91–122 (HEDTIADQEANRHGRSGKDPNYYRPPGLPDKY) are disordered.

It belongs to the SAA family. Homohexamer; dimer of trimers. Can form amyloid fibrils after partial proteolysis; the native, undenatured protein does not form amyloid fibrils (in vitro). Apolipoprotein of the HDL complex. Binds to heparin. In terms of tissue distribution, detected in blood plasma (at protein level). Detected in liver.

The protein localises to the secreted. Functionally, major acute phase protein. This chain is Serum amyloid A-1 protein (Saa1), found in Mus musculus (Mouse).